We begin with the raw amino-acid sequence, 395 residues long: MGIKHLYQVISENAPDAVKTGEIKNHFGRKVAIDASMSIYSFLIAVRSDGQQLMSEAGETTSHLMGMFYRTLRIVDNGIKPLYVFDGAPPKMKGGELAKRSARKREAHEAHEEAKETGTAEDMEKFSRRTVRVTREHNEECKKLLKLMGVPYIDAPTEAEAQCAVLARAGKVYAAASEDMDTLCFEAPILLRHLTFSEQRKEPILEIHLDKALEGLGMDMAQFIDLCILLGCDYLEPIPKVGPNTALKLIREHGSLEKVVEAIENDPKKKYVIPDDWPYQEARELFFNPDVRKADDPQCDFKWESPDVEGLVKFLVTDKGFSEDRVRNGAARLAKNLKTAQQSRLEGFFKPVAKTDAEKASMKRKHDEKIEEQKKRKKEDAKAKKEAKARPRGAV.

Residues 1–104 (MGIKHLYQVI…GELAKRSARK (104 aa)) are N-domain. Residue Asp34 coordinates Mg(2+). 2 residues coordinate DNA: Arg47 and Arg70. Asp86 is a Mg(2+) binding site. Residues 94–124 (GGELAKRSARKREAHEAHEEAKETGTAEDME) are disordered. Residues 122-253 (DMEKFSRRTV…NTALKLIREH (132 aa)) form an I-domain region. Mg(2+) contacts are provided by Glu158, Glu160, Asp179, and Asp181. DNA is bound at residue Glu158. DNA contacts are provided by Gly231 and Asp233. Asp233 contributes to the Mg(2+) binding site. Residues 341 to 349 (QQSRLEGFF) are interaction with PCNA. Over residues 356-389 (DAEKASMKRKHDEKIEEQKKRKKEDAKAKKEAKA) the composition is skewed to basic and acidic residues. The interval 356 to 395 (DAEKASMKRKHDEKIEEQKKRKKEDAKAKKEAKARPRGAV) is disordered.

It belongs to the XPG/RAD2 endonuclease family. FEN1 subfamily. Interacts with PCNA. Three molecules of fen1 bind to one PCNA trimer with each molecule binding to one PCNA monomer. PCNA stimulates the nuclease activity without altering cleavage specificity. It depends on Mg(2+) as a cofactor. Phosphorylated. Phosphorylation upon DNA damage induces relocalization to the nuclear plasma.

It localises to the nucleus. Its subcellular location is the nucleolus. The protein resides in the nucleoplasm. The protein localises to the mitochondrion. Functionally, structure-specific nuclease with 5'-flap endonuclease and 5'-3' exonuclease activities involved in DNA replication and repair. During DNA replication, cleaves the 5'-overhanging flap structure that is generated by displacement synthesis when DNA polymerase encounters the 5'-end of a downstream Okazaki fragment. It enters the flap from the 5'-end and then tracks to cleave the flap base, leaving a nick for ligation. Also involved in the long patch base excision repair (LP-BER) pathway, by cleaving within the apurinic/apyrimidinic (AP) site-terminated flap. Acts as a genome stabilization factor that prevents flaps from equilibrating into structures that lead to duplications and deletions. Also possesses 5'-3' exonuclease activity on nicked or gapped double-stranded DNA, and exhibits RNase H activity. Also involved in replication and repair of rDNA and in repairing mitochondrial DNA. The polypeptide is Flap endonuclease 1 (fen1) (Talaromyces marneffei (strain ATCC 18224 / CBS 334.59 / QM 7333) (Penicillium marneffei)).